The sequence spans 870 residues: Linoleate 9S-lipoxygenase 2 (870 aa).

In terms of domain architecture, PLAT spans 32–158; it reads NDFGATVIDG…KYRYNRVFFS (127 aa). Residues 161–870 form the Lipoxygenase domain; the sequence is TSLPSKMPAA…ARGIPNSISI (710 aa). The interval 203–243 is disordered; the sequence is YNDLGEPDSGNPRPVLGGSPDRPYPRRGRTGRKPTKTDPTA. Positions 227–236 are enriched in basic residues; that stretch reads PRRGRTGRKP. Residues histidine 525, histidine 530, histidine 716, asparagine 720, and isoleucine 870 each contribute to the Fe cation site.

Belongs to the lipoxygenase family. Monomer. Requires Fe cation as cofactor.

It localises to the cytoplasm. It catalyses the reaction (9Z,12Z)-octadecadienoate + O2 = (9S)-hydroperoxy-(10E,12Z)-octadecadienoate. Its pathway is lipid metabolism; oxylipin biosynthesis. Plant lipoxygenase may be involved in a number of diverse aspects of plant physiology including growth and development, pest resistance, and senescence or responses to wounding. Catalyzes the hydroperoxidation of lipids containing a cis,cis-1,4-pentadiene structure. The chain is Linoleate 9S-lipoxygenase 2 (LOX1.1) from Oryza sativa subsp. japonica (Rice).